A 100-amino-acid chain; its full sequence is Osteocalcin (100 aa).

Residues 1-23 (MRALTLLALLALATLCITGQAGA) form the signal peptide. Positions 24 to 51 (KPSGAESSKGAAFVSKQEGSEVVKRPRR) are excised as a propeptide. One can recognise a Gla domain in the interval 52–98 (YLYQWLGAPAPYPDPLEPKREVCELNPDCDELADHIGFQEAYRRFYG). Residue Pro60 is modified to 4-hydroxyproline. Residues Glu68, Glu72, Glu75, and Asp81 each coordinate Ca(2+). Glu68, Glu72, and Glu75 each carry 4-carboxyglutamate. A disulfide bridge links Cys74 with Cys80.

It belongs to the osteocalcin/matrix Gla protein family. In terms of processing, gamma-carboxyglutamate residues are formed by vitamin K dependent carboxylation by GGCX. These residues are essential for the binding of calcium. Decarboxylation promotes the hormone activity.

The protein resides in the secreted. Its function is as follows. The carboxylated form is one of the main organic components of the bone matrix, which constitutes 1-2% of the total bone protein: it acts as a negative regulator of bone formation and is required to limit bone formation without impairing bone resorption or mineralization. The carboxylated form binds strongly to apatite and calcium. In terms of biological role, the uncarboxylated form acts as a hormone secreted by osteoblasts, which regulates different cellular processes, such as energy metabolism, male fertility and brain development. Regulates of energy metabolism by acting as a hormone favoring pancreatic beta-cell proliferation, insulin secretion and sensitivity and energy expenditure. Uncarboxylated osteocalcin hormone also promotes testosterone production in the testes: acts as a ligand for G protein-coupled receptor GPRC6A at the surface of Leydig cells, initiating a signaling response that promotes the expression of enzymes required for testosterone synthesis in a CREB-dependent manner. Also acts as a regulator of brain development: osteocalcin hormone crosses the blood-brain barrier and acts as a ligand for GPR158 on neurons, initiating a signaling response that prevents neuronal apoptosis in the hippocampus, favors the synthesis of all monoamine neurotransmitters and inhibits that of gamma-aminobutyric acid (GABA). Osteocalcin also crosses the placenta during pregnancy and maternal osteocalcin is required for fetal brain development. The polypeptide is Osteocalcin (BGLAP) (Macaca mulatta (Rhesus macaque)).